Reading from the N-terminus, the 501-residue chain is Glutamyl-tRNA(Gln) amidotransferase subunit A (501 aa).

Catalysis depends on charge relay system residues K80 and S155. Catalysis depends on S179, which acts as the Acyl-ester intermediate.

It belongs to the amidase family. GatA subfamily. In terms of assembly, heterotrimer of A, B and C subunits.

It catalyses the reaction L-glutamyl-tRNA(Gln) + L-glutamine + ATP + H2O = L-glutaminyl-tRNA(Gln) + L-glutamate + ADP + phosphate + H(+). Allows the formation of correctly charged Gln-tRNA(Gln) through the transamidation of misacylated Glu-tRNA(Gln) in organisms which lack glutaminyl-tRNA synthetase. The reaction takes place in the presence of glutamine and ATP through an activated gamma-phospho-Glu-tRNA(Gln). In Cupriavidus taiwanensis (strain DSM 17343 / BCRC 17206 / CCUG 44338 / CIP 107171 / LMG 19424 / R1) (Ralstonia taiwanensis (strain LMG 19424)), this protein is Glutamyl-tRNA(Gln) amidotransferase subunit A.